The primary structure comprises 194 residues: Inosine triphosphate pyrophosphatase (194 aa).

10 to 15 is an ITP binding site; that stretch reads TTNLKK. Mg(2+) is bound at residue glutamate 36. ITP-binding positions include lysine 48, 66–67, lysine 83, lysine 166, and 171–172; these read DT and HR.

Belongs to the HAM1 NTPase family. In terms of assembly, homodimer. The cofactor is Mg(2+). Requires Mn(2+) as cofactor.

It localises to the cytoplasm. It is found in the nucleus. The enzyme catalyses ITP + H2O = IMP + diphosphate + H(+). It catalyses the reaction dITP + H2O = dIMP + diphosphate + H(+). It carries out the reaction XTP + H2O = XMP + diphosphate + H(+). Functionally, pyrophosphatase that hydrolyzes non-canonical purine nucleotides such as inosine triphosphate (ITP), deoxyinosine triphosphate (dITP) or xanthosine 5'-triphosphate (XTP) to their respective monophosphate derivatives. The enzyme does not distinguish between the deoxy- and ribose forms. Probably excludes non-canonical purines from RNA and DNA precursor pools, thus preventing their incorporation into RNA and DNA and avoiding chromosomal lesions. This chain is Inosine triphosphate pyrophosphatase, found in Encephalitozoon intestinalis (strain ATCC 50506) (Microsporidian parasite).